Consider the following 430-residue polypeptide: Glutamate-1-semialdehyde 2,1-aminomutase (430 aa).

Lys-267 is subject to N6-(pyridoxal phosphate)lysine.

Belongs to the class-III pyridoxal-phosphate-dependent aminotransferase family. HemL subfamily. Homodimer. Pyridoxal 5'-phosphate serves as cofactor.

The protein localises to the cytoplasm. It carries out the reaction (S)-4-amino-5-oxopentanoate = 5-aminolevulinate. It participates in porphyrin-containing compound metabolism; protoporphyrin-IX biosynthesis; 5-aminolevulinate from L-glutamyl-tRNA(Glu): step 2/2. The chain is Glutamate-1-semialdehyde 2,1-aminomutase from Anaeromyxobacter sp. (strain K).